The sequence spans 130 residues: Small ribosomal subunit protein uS9 (130 aa).

The tract at residues 107–130 is disordered; it reads DARMKERKKPGLKKARKASQFSKR. A compositionally biased stretch (basic residues) spans 111–130; it reads KERKKPGLKKARKASQFSKR.

It belongs to the universal ribosomal protein uS9 family.

The sequence is that of Small ribosomal subunit protein uS9 from Ligilactobacillus salivarius (strain UCC118) (Lactobacillus salivarius).